We begin with the raw amino-acid sequence, 144 residues long: Large ribosomal subunit protein uL16m (144 aa).

Belongs to the universal ribosomal protein uL16 family.

Its subcellular location is the mitochondrion. This Dictyostelium discoideum (Social amoeba) protein is Large ribosomal subunit protein uL16m (mrpl16).